The following is a 194-amino-acid chain: Inosine triphosphate pyrophosphatase (194 aa).

ITP is bound at residue 10-15 (TSSKKK). Residue Glu37 participates in Mg(2+) binding. Residues Lys49, 65-66 (DV), Lys82, 142-145 (FGWD), Lys166, and 171-172 (HR) contribute to the ITP site.

Belongs to the HAM1 NTPase family. Homodimer. It depends on Mg(2+) as a cofactor. Mn(2+) is required as a cofactor.

It localises to the cytoplasm. The catalysed reaction is ITP + H2O = IMP + diphosphate + H(+). It catalyses the reaction dITP + H2O = dIMP + diphosphate + H(+). The enzyme catalyses XTP + H2O = XMP + diphosphate + H(+). In terms of biological role, pyrophosphatase that hydrolyzes non-canonical purine nucleotides such as inosine triphosphate (ITP), deoxyinosine triphosphate (dITP) or xanthosine 5'-triphosphate (XTP) to their respective monophosphate derivatives. The enzyme does not distinguish between the deoxy- and ribose forms. Probably excludes non-canonical purines from RNA and DNA precursor pools, thus preventing their incorporation into RNA and DNA and avoiding chromosomal lesions. The chain is Inosine triphosphate pyrophosphatase from Giardia intestinalis (strain ATCC 50803 / WB clone C6) (Giardia lamblia).